The following is a 61-amino-acid chain: Large ribosomal subunit protein uL30 (61 aa).

The protein belongs to the universal ribosomal protein uL30 family. As to quaternary structure, part of the 50S ribosomal subunit.

The sequence is that of Large ribosomal subunit protein uL30 from Rubrobacter xylanophilus (strain DSM 9941 / JCM 11954 / NBRC 16129 / PRD-1).